We begin with the raw amino-acid sequence, 217 residues long: Thymidylate kinase (217 aa).

7-14 provides a ligand contact to ATP; it reads GIEGTGKT.

This sequence belongs to the thymidylate kinase family.

The catalysed reaction is dTMP + ATP = dTDP + ADP. Phosphorylation of dTMP to form dTDP in both de novo and salvage pathways of dTTP synthesis. The polypeptide is Thymidylate kinase (Maridesulfovibrio salexigens (strain ATCC 14822 / DSM 2638 / NCIMB 8403 / VKM B-1763) (Desulfovibrio salexigens)).